The chain runs to 443 residues: NADH-ubiquinone oxidoreductase chain 4 (443 aa).

A run of 15 helical transmembrane segments spans residues 1 to 21, 27 to 47, 71 to 91, 93 to 113, 114 to 134, 148 to 168, 187 to 207, 217 to 237, 247 to 267, 279 to 299, 308 to 328, 335 to 355, 362 to 382, 385 to 405, and 423 to 443; these read MFIS…PEAH, VWSF…WWNF, GVAL…MMLL, TVAG…ALCV, LDLL…FLLI, IVLY…MIYS, VLGW…PVHL, PTAG…IGFL, FCVS…LFST, IVAY…FSQS, FLMI…GILY, FILY…LFFL, AFPL…IFAV, LLAY…FWAF, and EFHT…KPMA.

The protein belongs to the complex I subunit 4 family.

The protein resides in the mitochondrion membrane. It catalyses the reaction a ubiquinone + NADH + 5 H(+)(in) = a ubiquinol + NAD(+) + 4 H(+)(out). Core subunit of the mitochondrial membrane respiratory chain NADH dehydrogenase (Complex I) that is believed to belong to the minimal assembly required for catalysis. Complex I functions in the transfer of electrons from NADH to the respiratory chain. The immediate electron acceptor for the enzyme is believed to be ubiquinone. In Chlamydomonas reinhardtii (Chlamydomonas smithii), this protein is NADH-ubiquinone oxidoreductase chain 4 (ND4).